Consider the following 610-residue polypeptide: DNA replication regulator sld2 (610 aa).

Residues 28–42 (WAQKNDGKKPSREAI) are compositionally biased toward basic and acidic residues. Disordered regions lie at residues 28–115 (WAQK…AVHE), 127–261 (SPAV…ERSV), and 338–610 (EQGG…RRRR). Polar residues-rich tracts occupy residues 86–110 (ETSL…SQHY) and 232–261 (TKTS…ERSV). 2 stretches are compositionally biased toward acidic residues: residues 373 to 386 (VPEE…DEAA) and 414 to 428 (FDDE…EEDL). Basic residues predominate over residues 442–464 (VFKKKGQKRTTRKVNMRPTRTKR). Acidic residues predominate over residues 470 to 480 (AEEEDDGEEEH). Residues 493-503 (KNLDGDDHHTL) show a composition bias toward basic and acidic residues. The span at 514-527 (EFDDGSEGEDEEAE) shows a compositional bias: acidic residues. A compositionally biased stretch (basic and acidic residues) spans 544-573 (SAKEKTKKDATTETKKKKGTKEGGDEEPAK).

The protein belongs to the SLD2 family.

The protein localises to the cytoplasm. The protein resides in the nucleus. Has a role in the initiation of DNA replication. Required at S-phase checkpoint. The chain is DNA replication regulator sld2 (drc-4) from Neurospora crassa (strain ATCC 24698 / 74-OR23-1A / CBS 708.71 / DSM 1257 / FGSC 987).